The primary structure comprises 227 residues: Prolactin (227 aa).

The N-terminal stretch at Met1–Pro28 is a signal peptide. A disulfide bridge links Cys32 with Cys39. Ser54 carries the phosphoserine modification. Residue Asn59 is glycosylated (N-linked (GlcNAc...) asparagine; partial). Ser62, Ser118, Ser163, and Ser194 each carry phosphoserine. 2 disulfides stabilise this stretch: Cys86/Cys202 and Cys219/Cys227.

This sequence belongs to the somatotropin/prolactin family. Interacts with PRLR.

The protein resides in the secreted. In terms of biological role, prolactin acts primarily on the mammary gland by promoting lactation. The polypeptide is Prolactin (PRL) (Homo sapiens (Human)).